The primary structure comprises 135 residues: Small ribosomal subunit protein uS11 (135 aa).

Over residues 1 to 11 (MPPKARAGAAV) the composition is skewed to low complexity. The tract at residues 1–22 (MPPKARAGAAVKKVRRKERKNV) is disordered.

Belongs to the universal ribosomal protein uS11 family. As to quaternary structure, part of the 30S ribosomal subunit. Interacts with proteins S7 and S18. Binds to IF-3.

Located on the platform of the 30S subunit, it bridges several disparate RNA helices of the 16S rRNA. Forms part of the Shine-Dalgarno cleft in the 70S ribosome. The sequence is that of Small ribosomal subunit protein uS11 from Salinispora tropica (strain ATCC BAA-916 / DSM 44818 / JCM 13857 / NBRC 105044 / CNB-440).